Here is a 445-residue protein sequence, read N- to C-terminus: Vacuolar fusion protein CCZ1 homolog (445 aa).

The protein belongs to the CCZ1 family.

The protein is Vacuolar fusion protein CCZ1 homolog of Dictyostelium discoideum (Social amoeba).